The sequence spans 531 residues: Probable rhamnogalacturonate lyase A (531 aa).

Residues 1–20 (MLSKALFFSSLPLWAKVASA) form the signal peptide. 2 disulfides stabilise this stretch: cysteine 50–cysteine 93 and cysteine 184–cysteine 193. N-linked (GlcNAc...) asparagine glycosylation is present at asparagine 351.

The protein belongs to the polysaccharide lyase 4 family.

It is found in the secreted. The enzyme catalyses Endotype eliminative cleavage of L-alpha-rhamnopyranosyl-(1-&gt;4)-alpha-D-galactopyranosyluronic acid bonds of rhamnogalacturonan I domains in ramified hairy regions of pectin leaving L-rhamnopyranose at the reducing end and 4-deoxy-4,5-unsaturated D-galactopyranosyluronic acid at the non-reducing end.. Functionally, pectinolytic enzymes consist of four classes of enzymes: pectin lyase, polygalacturonase, pectin methylesterase and rhamnogalacturonase. Degrades the rhamnogalacturonan I (RG-I) backbone of pectin. This chain is Probable rhamnogalacturonate lyase A (rglA), found in Aspergillus terreus (strain NIH 2624 / FGSC A1156).